A 904-amino-acid chain; its full sequence is Translation initiation factor IF-2 (904 aa).

3 disordered regions span residues 102–122 (TYVKSENEGGGRAAPMTPDEE), 134–252 (RQRN…MVAG), and 267–316 (HLSA…ERPT). Residues 134–177 (RQRNLEEQQRLAESDRVRDEAIQRKREEEQAAKDRAEAERKAAE) show a composition bias toward basic and acidic residues. The segment covering 178-230 (EAAAAASAPAPVADAPKPSAAAPAARLPSSPSSAPRAARPAGASPASRPAAPA) has biased composition (low complexity). One can recognise a tr-type G domain in the interval 403–572 (SRPPVVTIMG…SLQAEVLELK (170 aa)). The G1 stretch occupies residues 412–419 (GHVDHGKT). 412-419 (GHVDHGKT) lines the GTP pocket. The segment at 437–441 (GITQH) is G2. The G3 stretch occupies residues 458-461 (DTPG). GTP contacts are provided by residues 458-462 (DTPGH) and 512-515 (NKID). Positions 512-515 (NKID) are G4. Residues 548-550 (SAK) form a G5 region.

It belongs to the TRAFAC class translation factor GTPase superfamily. Classic translation factor GTPase family. IF-2 subfamily.

It localises to the cytoplasm. One of the essential components for the initiation of protein synthesis. Protects formylmethionyl-tRNA from spontaneous hydrolysis and promotes its binding to the 30S ribosomal subunits. Also involved in the hydrolysis of GTP during the formation of the 70S ribosomal complex. The protein is Translation initiation factor IF-2 of Xanthomonas axonopodis pv. citri (strain 306).